We begin with the raw amino-acid sequence, 753 residues long: Protein-lysine N-methyltransferase SMYD4 (753 aa).

112 to 114 serves as a coordination point for S-adenosyl-L-methionine; that stretch reads RSA. One can recognise an SET domain in the interval 186-528; sequence DGVSVYFSSD…AGQEILHCYG (343 aa). 8 residues coordinate Zn(2+): C246, C249, C259, C262, C268, C272, H281, and C285. Residues 246 to 285 form an MYND-type zinc finger; sequence CHHCLSQSLSFVPCPKCSYARYCGESCQKDAWDQWHQWEC. S-adenosyl-L-methionine is bound by residues 467–468 and Y527; that span reads NH.

It belongs to the class V-like SAM-binding methyltransferase superfamily.

It localises to the nucleus. The protein localises to the cytoplasm. It carries out the reaction L-lysyl-[protein] + S-adenosyl-L-methionine = N(6)-methyl-L-lysyl-[protein] + S-adenosyl-L-homocysteine + H(+). Functionally, protein-lysine N-methyltransferase. Monomethylates PRMT5, modulating its transcriptional activity. May also act as a histone methyltransferase. Plays a critical role in cardiac development. Acts as a key epigenetic regulator of gene expression during cardiac development via its dual activities as a methyltransferase and negative regulator of HDAC1. The sequence is that of Protein-lysine N-methyltransferase SMYD4 (smyd4) from Danio rerio (Zebrafish).